The sequence spans 149 residues: Large ribosomal subunit protein uL15 (149 aa).

The tract at residues 1-61 (MELNSLRPAL…GGQMPLQRRL (61 aa)) is disordered. The segment covering 30 to 39 (TATKGHKGQK) has biased composition (basic residues).

It belongs to the universal ribosomal protein uL15 family. In terms of assembly, part of the 50S ribosomal subunit.

Binds to the 23S rRNA. The protein is Large ribosomal subunit protein uL15 of Trichlorobacter lovleyi (strain ATCC BAA-1151 / DSM 17278 / SZ) (Geobacter lovleyi).